We begin with the raw amino-acid sequence, 3032 residues long: DmX-like protein 2 (3032 aa).

WD repeat units follow at residues 108–145 (FLSSVTYNLAWDPQDNRLLTATDSIQLWAPPGGDILEE), 167–207 (KTSV…KSSI), and 230–278 (AHPR…EDCL). Position 326 is a phosphoserine (Ser-326). Residues 418 to 486 (QLDHESDDAD…HPRPSISMPL (69 aa)) are disordered. Over residues 422 to 434 (ESDDADREDEERS) the composition is skewed to acidic residues. Basic and acidic residues predominate over residues 435–474 (QDERERGLRMKLDHELSLDRESEAGTGSSEHEDGEREGSP). Ser-473 carries the post-translational modification Phosphoserine. One copy of the WD 4 repeat lies at 492 to 532 (DRKIETLLTEWNKNPDMLFTIHPVDGTFLVWHVKYLDEYNP). The interval 577 to 598 (PSQQEMMSVDSPHGSQLHSPSH) is disordered. Ser-587 bears the Phosphoserine mark. Residues 589 to 598 (HGSQLHSPSH) are compositionally biased toward polar residues. WD repeat units follow at residues 594 to 633 (HSPSHSTDMNILAPTVMMVSKHIDGSLNQWAVTFADKSAF), 750 to 802 (LHTS…RKLL), and 879 to 921 (QPSQ…VQAC). Residues 937 to 958 (VPGQKNLDSSPETSSSMSSVPH) form a disordered region. Phosphoserine is present on residues Ser-945 and Ser-946. Over residues 945-958 (SSPETSSSMSSVPH) the composition is skewed to low complexity. The stretch at 1001–1038 (LSSSSIYPVCLAPYLVVTTCSDNKVRFWKCCMETNSLG) is one WD 8 repeat. A phosphoserine mark is found at Ser-1141, Ser-1144, and Ser-1152. WD repeat units lie at residues 1164–1205 (PNIK…VSDQ) and 1245–1285 (GTPS…GNVD). 2 positions are modified to phosphoserine: Ser-1288 and Ser-1399. Phosphothreonine is present on Thr-1416. Positions 1443–1464 (RISEDSTKKPQSYEDHIESQSE) are disordered. Positions 1444–1461 (ISEDSTKKPQSYEDHIES) are enriched in basic and acidic residues. Ser-1856 carries the phosphoserine modification. The interval 1922–1953 (QLDSVSGRMENGPSESKPVSRSDGGSGADWSA) is disordered. Thr-2017 is subject to Phosphothreonine. Residues 2117–2146 (GSYERHQIERRRLQAKREHAERRKLWLQKN) adopt a coiled-coil conformation. Ser-2394 and Ser-2636 each carry phosphoserine. Positions 2722-2732 (QPGAASHSSSQ) are enriched in low complexity. Residues 2722–2744 (QPGAASHSSSQPHPPPSLPWLGS) form a disordered region. WD repeat units follow at residues 2757 to 2796 (RNLHNVKRMTSHPVHQYYLTGAQDGSVRMFEWTRPQQLVC), 2800 to 2839 (AGNARVTRLYFNSQGNKCGVADGEGFLSIWQVNQTASNPK), 2846 to 2888 (CHSK…GNSL), 2894 to 2933 (CHDHGATVLQYAPKQQLLISGGRKGYICIFDIRQRQLIHT), 2936 to 2975 (AHDSAIKALALDSCEEYFTTGSAEGNIKVWRLTGHGLIHS), and 2988 to 3026 (NIGAGVMQIAISQDNRLFSCGADGTLKTRVLPSAFNIPN).

In terms of assembly, interacts with MADD and RAB3GAP. Expressed in the brain and pituitary gland. Detected in the hippocampus, dentate gyrus, hypothalamus, pyriform cortex and the granular and molecular layers of the cerebellum of adult animals. In the hypothalamus, expression is observed in the arcuate nucleus, the ME, the organum vasculosum of the lamina terminalis, and the subfornical organ, the subcommissural organ, and the suprachiasmatic nucleus. Both tanycytes and hypothalamic neurosecretory neurons express the protein. Expressed in the inner and outer hair cells as well as in the spiral ganglion neurons. Expressed in insulin-secreting cells of the islets of Langerhans in the pancreas.

It is found in the cytoplasmic vesicle. The protein resides in the secretory vesicle. The protein localises to the synaptic vesicle membrane. It localises to the neuronal dense core vesicle. In terms of biological role, may serve as a scaffold protein for MADD and RAB3GA on synaptic vesicles of neuronal and endocrine homeostatic processes. Plays a role in the brain as a key controller of neuronal and endocrine homeostatic processes. The chain is DmX-like protein 2 (Dmxl2) from Mus musculus (Mouse).